We begin with the raw amino-acid sequence, 48 residues long: Fimbrial assembly protein, serogroup E2 (48 aa).

The chain is Fimbrial assembly protein, serogroup E2 (fimB) from Dichelobacter nodosus (Bacteroides nodosus).